Consider the following 702-residue polypeptide: MAQFKRTLVTTALPYANGPVHLGHLAGVYLPADIYVRHKRLKGEEVLHIGGSDEHGVPITITAEKEGISPRDVVDRYHRMNLEAFLKCGISFDCYGRTSSELHHETAQEFFLELERKGIFNRRTEKLFYDAEGGRFLSDRYVSGTCPICGSTEASGDQCEQCGTHLSPMELINPKSKISNATPELRDTLHWYFPLGRYQAELERFVNSHEDDWRSNVLNYTRTWLKGGLNDRAITRDLNWGIKVPLGEAEAVGKVLYVWFDAVLGYISFTRQWAEEQGDRDLWRHWWQNPETRLVQFIGKDNVVFHTLMLPAILMAWNEGREDGIYNLADNVPASEFMNFEGRKFSKSRNYAVYLGEFLQKFPADTLRYSIAMNYPENKDTDFSWTDFQNRTNGELADTLGNFIKRSIDFTNSRFGGEVPHSCTVQEWEGLGIDWYATQSQLDQAYEGFHFREAATIAMDIARAANRFLTSAEPWKAIKTDPEAAGRTMALSLNLCHALSIALYPVIPETCDRIHRMLGFKGGVDGLVRKCEPILKTLLEPALPMGHKLSPESEILFRKIEDQEIQPELQKIEQLVREAEAREAGAIEVKIEFKPAIGFDDFQKVDLRVATVRAAEKVKKASKLLKLQVQVGSTQRQVLAGVAEHYSPEEMVGKNVLLVANLAPRTIRGEISEGMLLAVEGEGGRLFMVEPQGEKINGQSVQ.

Residues 14–24 (PYANGPVHLGH) carry the 'HIGH' region motif. Zn(2+) is bound by residues C146, C149, C159, and C162. Residues 344–348 (KFSKS) carry the 'KMSKS' region motif. Residue K347 participates in ATP binding. The tRNA-binding domain occupies 601 to 702 (DFQKVDLRVA…GEKINGQSVQ (102 aa)).

This sequence belongs to the class-I aminoacyl-tRNA synthetase family. MetG type 1 subfamily. In terms of assembly, homodimer. The cofactor is Zn(2+).

It localises to the cytoplasm. It carries out the reaction tRNA(Met) + L-methionine + ATP = L-methionyl-tRNA(Met) + AMP + diphosphate. Functionally, is required not only for elongation of protein synthesis but also for the initiation of all mRNA translation through initiator tRNA(fMet) aminoacylation. The chain is Methionine--tRNA ligase from Chlorobium luteolum (strain DSM 273 / BCRC 81028 / 2530) (Pelodictyon luteolum).